The following is a 190-amino-acid chain: Copper-binding lipoprotein NosL (190 aa).

A signal peptide spans 1–23 (MNALHRIGAGTLLAVLLAFGLTG). Cys-24 carries N-palmitoyl cysteine lipidation. A lipid anchor (S-diacylglycerol cysteine) is attached at Cys-24. Residues 170 to 190 (MQHGGMHDHAPNGAHNAHAGH) are disordered. Low complexity predominate over residues 180–190 (PNGAHNAHAGH).

This sequence belongs to the NosL family. In terms of assembly, monomer.

It is found in the cell membrane. Functionally, may act as a metallochaperone involved in nitrous oxide reductase assembly. Specifically binds Cu(+). In Stutzerimonas stutzeri (Pseudomonas stutzeri), this protein is Copper-binding lipoprotein NosL.